We begin with the raw amino-acid sequence, 407 residues long: Phosphopentomutase (407 aa).

6 residues coordinate Mn(2+): aspartate 10, aspartate 306, histidine 311, aspartate 347, histidine 348, and histidine 359.

This sequence belongs to the phosphopentomutase family. It depends on Mn(2+) as a cofactor.

It is found in the cytoplasm. The catalysed reaction is 2-deoxy-alpha-D-ribose 1-phosphate = 2-deoxy-D-ribose 5-phosphate. The enzyme catalyses alpha-D-ribose 1-phosphate = D-ribose 5-phosphate. The protein operates within carbohydrate degradation; 2-deoxy-D-ribose 1-phosphate degradation; D-glyceraldehyde 3-phosphate and acetaldehyde from 2-deoxy-alpha-D-ribose 1-phosphate: step 1/2. Its function is as follows. Isomerase that catalyzes the conversion of deoxy-ribose 1-phosphate (dRib-1-P) and ribose 1-phosphate (Rib-1-P) to deoxy-ribose 5-phosphate (dRib-5-P) and ribose 5-phosphate (Rib-5-P), respectively. The chain is Phosphopentomutase from Salmonella paratyphi A (strain AKU_12601).